The chain runs to 407 residues: Argininosuccinate synthase (407 aa).

ATP contacts are provided by residues Ala10 to Ser18 and Ala37. Residues Tyr90 and Ser95 each coordinate L-citrulline. An ATP-binding site is contributed by Gly120. Positions 122, 126, and 127 each coordinate L-aspartate. Asn126 is a binding site for L-citrulline. Residues Arg130, Ser181, Ser190, Glu266, and Tyr278 each contribute to the L-citrulline site.

This sequence belongs to the argininosuccinate synthase family. Type 1 subfamily. In terms of assembly, homotetramer.

It localises to the cytoplasm. The enzyme catalyses L-citrulline + L-aspartate + ATP = 2-(N(omega)-L-arginino)succinate + AMP + diphosphate + H(+). It participates in amino-acid biosynthesis; L-arginine biosynthesis; L-arginine from L-ornithine and carbamoyl phosphate: step 2/3. This chain is Argininosuccinate synthase, found in Ruegeria sp. (strain TM1040) (Silicibacter sp.).